A 280-amino-acid chain; its full sequence is Transcription factor HES-1 (280 aa).

Residues 1 to 44 are disordered; it reads MPADIMEKNSSSPVAATPASVNTTPDKPKTASEHRKSSKPIMEK. A compositionally biased stretch (low complexity) spans 10–21; it reads SSSPVAATPASV. Residues 26-35 show a composition bias toward basic and acidic residues; the sequence is DKPKTASEHR. The region spanning 34–91 is the bHLH domain; it reads HRKSSKPIMEKRRRARINESLSQLKTLILDALKKDSSRHSKLEKADILEMTVKHLRNL. Residues 110 to 143 enclose the Orange domain; the sequence is YRAGFSECMNEVTRFLSTCEGVNTEVRTRLLGHL. Disordered stretches follow at residues 157–200 and 254–280; these read GQPH…PPGG and TSVG…PWRN. 2 stretches are compositionally biased toward pro residues: residues 164–174 and 181–200; these read QAPPPPPPGPG and FAPP…PPGG. The span at 254 to 271 shows a compositional bias: polar residues; the sequence is TSVGPNAVSPSSGPSLTA. The WRPW motif signature appears at 275-278; the sequence is WRPW.

In terms of assembly, transcription repression requires formation of a complex with a corepressor protein of the Groucho/TLE family. Interacts with SIRT1. Interacts (via WPRW motif) with TLE1, and more weakly with TLE2. Interacts with HES6. Interacts with an FA complex, composed of FANCA, FANCF, FANCG and FANCL, but not of FANCC, nor FANCE.

Its subcellular location is the nucleus. Functionally, transcriptional repressor of genes that require a bHLH protein for their transcription. May act as a negative regulator of myogenesis by inhibiting the functions of MYOD1 and ASH1. Binds DNA on N-box motifs: 5'-CACNAG-3' with high affinity and on E-box motifs: 5'-CANNTG-3' with low affinity. May play a role in a functional FA core complex response to DNA cross-link damage, being required for the stability and nuclear localization of FA core complex proteins, as well as for FANCD2 monoubiquitination in response to DNA damage. This chain is Transcription factor HES-1 (HES1), found in Bos taurus (Bovine).